The sequence spans 896 residues: Isoleucine--tRNA ligase (896 aa).

The 'HIGH' region motif lies at 57–67; sequence PYANNNIHIGH. L-isoleucyl-5'-AMP is bound at residue glutamate 543. Positions 584–588 match the 'KMSKS' region motif; sequence KMSKS. Lysine 587 contributes to the ATP binding site. Positions 869, 872, 885, and 888 each coordinate Zn(2+).

The protein belongs to the class-I aminoacyl-tRNA synthetase family. IleS type 1 subfamily. As to quaternary structure, monomer. It depends on Zn(2+) as a cofactor.

The protein resides in the cytoplasm. It carries out the reaction tRNA(Ile) + L-isoleucine + ATP = L-isoleucyl-tRNA(Ile) + AMP + diphosphate. Its function is as follows. Catalyzes the attachment of isoleucine to tRNA(Ile). As IleRS can inadvertently accommodate and process structurally similar amino acids such as valine, to avoid such errors it has two additional distinct tRNA(Ile)-dependent editing activities. One activity is designated as 'pretransfer' editing and involves the hydrolysis of activated Val-AMP. The other activity is designated 'posttransfer' editing and involves deacylation of mischarged Val-tRNA(Ile). The polypeptide is Isoleucine--tRNA ligase (Acholeplasma laidlawii (strain PG-8A)).